The sequence spans 524 residues: Cytochrome P450 CYP749A22 (524 aa).

A helical membrane pass occupies residues 12 to 32; that stretch reads TPILFQFLLSSLCVFLLFVFI. C472 is a binding site for heme.

Belongs to the cytochrome P450 family. Requires heme as cofactor.

The protein localises to the membrane. In terms of biological role, probable heme-thiolate monooxygenase. The protein is Cytochrome P450 CYP749A22 of Panax ginseng (Korean ginseng).